The primary structure comprises 186 residues: Alkyl hydroperoxide reductase AhpD (186 aa).

C132 acts as the Proton donor in catalysis. Residues C132 and C135 are joined by a disulfide bond. The active-site Cysteine sulfenic acid (-SOH) intermediate is the C135.

It belongs to the AhpD family.

The enzyme catalyses N(6)-[(R)-dihydrolipoyl]-L-lysyl-[lipoyl-carrier protein] + a hydroperoxide = N(6)-[(R)-lipoyl]-L-lysyl-[lipoyl-carrier protein] + an alcohol + H2O. Antioxidant protein with alkyl hydroperoxidase activity. Required for the reduction of the AhpC active site cysteine residues and for the regeneration of the AhpC enzyme activity. The polypeptide is Alkyl hydroperoxide reductase AhpD (Anaeromyxobacter dehalogenans (strain 2CP-1 / ATCC BAA-258)).